The chain runs to 286 residues: Citrullinase (286 aa).

Positions 4–258 (IKVAVVQLSF…DDILYATFDF (255 aa)) constitute a CN hydrolase domain. Glu43 functions as the Proton acceptor in the catalytic mechanism. Lys116 is a catalytic residue. Cys153 functions as the Nucleophile in the catalytic mechanism.

The protein belongs to the carbon-nitrogen hydrolase superfamily.

It catalyses the reaction L-citrulline + H2O + 2 H(+) = L-ornithine + NH4(+) + CO2. In terms of biological role, catalyzes the degradation of citrulline into ornithine, carbon dioxide and ammonia. Contributes to intramacrophage survival, in vivo growth and pathogenesis. The sequence is that of Citrullinase from Francisella tularensis subsp. tularensis (strain SCHU S4 / Schu 4).